Reading from the N-terminus, the 451-residue chain is AAA-ATPase At3g50940 (451 aa).

The first 25 residues, 1-25 (MSSSSESHLATAKTALTAVASVAAA), serve as a signal peptide directing secretion. 254-261 (GPPGTGKS) serves as a coordination point for ATP.

Belongs to the AAA ATPase family. BCS1 subfamily. Mg(2+) serves as cofactor.

It catalyses the reaction ATP + H2O = ADP + phosphate + H(+). In Arabidopsis thaliana (Mouse-ear cress), this protein is AAA-ATPase At3g50940.